We begin with the raw amino-acid sequence, 207 residues long: Guanylate kinase (207 aa).

A Guanylate kinase-like domain is found at 5 to 184; that stretch reads GNLFIVSAPS…ALADLRAIIR (180 aa). 12-19 lines the ATP pocket; the sequence is APSGAGKS.

This sequence belongs to the guanylate kinase family.

The protein localises to the cytoplasm. It catalyses the reaction GMP + ATP = GDP + ADP. Its function is as follows. Essential for recycling GMP and indirectly, cGMP. The chain is Guanylate kinase from Shewanella oneidensis (strain ATCC 700550 / JCM 31522 / CIP 106686 / LMG 19005 / NCIMB 14063 / MR-1).